A 291-amino-acid chain; its full sequence is G1/S-specific cyclin-D1 (291 aa).

Threonine 282 is modified (phosphothreonine).

It belongs to the cyclin family. Cyclin D subfamily. Interacts with the CDK4 and CDK6 protein kinases to form a serine/threonine kinase holoenzyme complex. The cyclin subunit imparts substrate specificity to the complex. In terms of processing, phosphorylation at Thr-282 by MAP kinases is required for ubiquitination and degradation by the DCX(AMBRA1) complex. Ubiquitinated by the DCX(AMBRA1) complex during the transition from G1 to S cell phase, leading to its degradation. The DCX(AMBRA1) complex represents the major regulator of CCND1 stability during the G1/S transition.

It localises to the nucleus. The protein localises to the cytoplasm. Functionally, regulatory component of the cyclin D1-CDK4 (DC) complex that phosphorylates and inhibits members of the retinoblastoma (RB) protein family including RB1 and regulates the cell-cycle during G(1)/S transition. Phosphorylation of RB1 allows dissociation of the transcription factor E2F from the RB/E2F complex and the subsequent transcription of E2F target genes which are responsible for the progression through the G(1) phase. Hypophosphorylates RB1 in early G(1) phase. Cyclin D-CDK4 complexes are major integrators of various mitogenenic and antimitogenic signals. This Danio rerio (Zebrafish) protein is G1/S-specific cyclin-D1 (ccnd1).